The following is a 194-amino-acid chain: Large ribosomal subunit protein bL9 (194 aa).

Positions 156–167 are enriched in basic and acidic residues; it reads RGEDISSRREDQ. Residues 156–194 form a disordered region; it reads RGEDISSRREDQDAAAEAIAAAGEFFDPDAQQDEEPEQQ. Positions 181–194 are enriched in acidic residues; sequence FDPDAQQDEEPEQQ.

This sequence belongs to the bacterial ribosomal protein bL9 family.

Binds to the 23S rRNA. In Rhodopseudomonas palustris (strain BisB5), this protein is Large ribosomal subunit protein bL9.